The chain runs to 76 residues: Waprin-Rha1 (76 aa).

The signal sequence occupies residues 1 to 24 (MQARVFLLLLGVILLGMMGPMVSA). The 51-residue stretch at 25–75 (QDGKAGSCPDVNQPIPPLGVCKTTCATDSNCPDIQKCCKNGCGHMSCTRPS) folds into the WAP domain. Cystine bridges form between cysteine 32–cysteine 62, cysteine 45–cysteine 66, cysteine 49–cysteine 61, and cysteine 55–cysteine 71.

It belongs to the venom waprin family. Expressed by the venom gland.

It localises to the secreted. Its function is as follows. Damages membranes of susceptible bacteria. Has no hemolytic activity. Not toxic to mice. Does not inhibit the proteinases elastase and cathepsin G. The protein is Waprin-Rha1 of Rhabdophis tigrinus tigrinus (Tiger keelback snake).